Here is a 270-residue protein sequence, read N- to C-terminus: Ribonuclease HII (270 aa).

The RNase H type-2 domain maps to 28–222; the sequence is RQVAGADEAG…VSGRQGAPPR (195 aa). 3 residues coordinate a divalent metal cation: Asp34, Glu35, and Asp128.

It belongs to the RNase HII family. Requires Mn(2+) as cofactor. It depends on Mg(2+) as a cofactor.

The protein resides in the cytoplasm. It carries out the reaction Endonucleolytic cleavage to 5'-phosphomonoester.. Endonuclease that specifically degrades the RNA of RNA-DNA hybrids. The sequence is that of Ribonuclease HII from Salinispora tropica (strain ATCC BAA-916 / DSM 44818 / JCM 13857 / NBRC 105044 / CNB-440).